We begin with the raw amino-acid sequence, 239 residues long: dITP/XTP pyrophosphatase (239 aa).

Residue Thr-7–Lys-12 participates in substrate binding. Asp-74 (proton acceptor) is an active-site residue. Asp-74 serves as a coordination point for Mg(2+). Substrate is bound by residues Ser-75, Phe-182 to Asp-185, Lys-214, and His-219 to Arg-220.

Belongs to the HAM1 NTPase family. In terms of assembly, homodimer. It depends on Mg(2+) as a cofactor.

The enzyme catalyses XTP + H2O = XMP + diphosphate + H(+). It catalyses the reaction dITP + H2O = dIMP + diphosphate + H(+). It carries out the reaction ITP + H2O = IMP + diphosphate + H(+). Pyrophosphatase that catalyzes the hydrolysis of nucleoside triphosphates to their monophosphate derivatives, with a high preference for the non-canonical purine nucleotides XTP (xanthosine triphosphate), dITP (deoxyinosine triphosphate) and ITP. Seems to function as a house-cleaning enzyme that removes non-canonical purine nucleotides from the nucleotide pool, thus preventing their incorporation into DNA/RNA and avoiding chromosomal lesions. In Bifidobacterium animalis subsp. lactis (strain AD011), this protein is dITP/XTP pyrophosphatase.